The primary structure comprises 442 residues: UDP-N-acetylglucosamine--peptide N-acetylglucosaminyltransferase stabilizing protein GtfB (442 aa).

The protein belongs to the GtfB family. In terms of assembly, interacts with glycosyltransferase GtfA (Gtf1). Interacts with glycosyltransferase GtfA; probably forms a heterotetramer with 2 subunits each of GtfA and GtfB. Part of the accessory SecA2/SecY2 protein translocation apparatus.

The protein localises to the cell membrane. Its pathway is protein modification; protein glycosylation. Required for the polymorphic O-glycosylation of the serine-rich repeat protein Srr2. A stabilizing protein that is part of the accessory SecA2/SecY2 system specifically required to export serine-rich repeat proteins, probably Srr2 in this organism. The GtfA-GtfB (Gtf1-Gtf2 in this bacteria) complex adds GlcNAc from UDP-GlcNAc to Srr2 substrate, attaching the first sugar residue. Stabilizes the glycosylation activity of GtfA in vivo. Upon expression in a gtfB deletion mutant of S.parasanguis, GtfB confers incorrect glycosylation and partial complementation of a biofilm formation defect, while GtfA/GtfB restores correct expression of serine-rich repeat protein Fap1 and completely restores a biofilm formation defect in a S.parasanguis double gtfA-gtfB deletion. The sequence is that of UDP-N-acetylglucosamine--peptide N-acetylglucosaminyltransferase stabilizing protein GtfB from Streptococcus agalactiae.